Here is a 77-residue protein sequence, read N- to C-terminus: Probable [Fe-S]-dependent transcriptional repressor (77 aa).

The iron-sulfur cluster site is built by C54, C59, C62, and C68.

It belongs to the FeoC family.

Its function is as follows. May function as a transcriptional regulator that controls feoABC expression. The polypeptide is Probable [Fe-S]-dependent transcriptional repressor (Proteus mirabilis (strain HI4320)).